The primary structure comprises 1265 residues: Kinesin-related protein 13 (1265 aa).

The Kinesin motor domain maps to N23–I350. G106–T113 provides a ligand contact to ATP. Residues L331–I459 adopt a coiled-coil conformation. 5 disordered regions span residues K918–I1026, S1085–L1119, L1127–S1146, L1158–L1214, and F1245–K1265. The segment covering I930 to S951 has biased composition (low complexity). Composition is skewed to polar residues over residues H960–C980, L1003–I1026, and S1085–L1097. Low complexity-rich tracts occupy residues Q1100–L1119 and Q1128–S1146. A compositionally biased stretch (acidic residues) spans L1158–D1169. Low complexity predominate over residues S1174–V1195. Residues T1250–K1265 are compositionally biased toward polar residues.

The protein belongs to the TRAFAC class myosin-kinesin ATPase superfamily. Kinesin family. BimC subfamily.

The protein resides in the cytoplasm. The protein localises to the cytoskeleton. Its function is as follows. Microtubule-associated force-producing protein that plays a role in organelle transport. Its motor activity is directed toward the microtubule's plus end. Cooperates with dynein to control the spindle elongation rate, but is dispensable for mitosis. This chain is Kinesin-related protein 13 (kif13), found in Dictyostelium discoideum (Social amoeba).